The chain runs to 292 residues: Expansin-like protein 6 (292 aa).

Positions 1 to 24 are cleaved as a signal peptide; it reads MIKIIYLIVLLVLLFKNNHIIIKA. Residues 25-267 are Extracellular-facing; sequence DDCPFPQIPI…QITSNSNNIL (243 aa). The Expansin-like EG45 domain maps to 47-150; it reads HASCGFEKLT…IKVPCPTYGN (104 aa). 2 cysteine pairs are disulfide-bonded: Cys50–Cys80 and Cys83–Cys145. Asn92 carries N-linked (GlcNAc...) asparagine glycosylation. Residues 268–288 traverse the membrane as a helical segment; it reads PPSLYIIFLISILFLIINNIF. Residues 289–292 lie on the Cytoplasmic side of the membrane; it reads SNKY.

It belongs to the expansin family. Expansin A subfamily.

It localises to the membrane. In terms of biological role, may serve to lubricate the movement of the cellulose microfibrils during cell growth and wall extension and/or may serve to maintain the fluid state of the slug cell wall. The chain is Expansin-like protein 6 (expl6) from Dictyostelium discoideum (Social amoeba).